Here is a 237-residue protein sequence, read N- to C-terminus: DNA replication inhibitor toxin SocB (237 aa).

In terms of assembly, interacts with cognate antitoxin SocA and with beta sliding clamp (dnaN). Post-translationally, degraded by ClpXP, recognition of SocB by ClpX requires SocA.

The protein localises to the cytoplasm. Toxic component of an atypical type II toxin-antitoxin (TA) system. Upon overexpression in the absence of its cognate antitoxin SocA, leads to inhibition of colony formation, cellular filamentation, incomplete DNA replication and induction of the SOS response. Exercises toxicity by binding the beta sliding clamp (dnaN), blocking DNA replication and leading to premature replication fork collapse and incomplete cell division. Unlike most type II TA systems, the SocB toxin is unstable and targeted by its cognate antitoxin SocA for degradation by ClpXP. Not toxic upon expression in E.coli. The chain is DNA replication inhibitor toxin SocB from Caulobacter vibrioides (strain NA1000 / CB15N) (Caulobacter crescentus).